Here is a 645-residue protein sequence, read N- to C-terminus: Serine/threonine-protein kinase BUR1 (645 aa).

A Protein kinase domain is found at 55–379 (YREEEKLGQG…AMKAKKHPFF (325 aa)). Residues 61–69 (LGQGTFGEV) and K84 contribute to the ATP site. The active-site Proton acceptor is the D208. Disordered regions lie at residues 407 to 428 (EMNE…STDN), 442 to 513 (ASIP…KYPA), and 533 to 645 (RYRN…ADYY). Composition is skewed to polar residues over residues 409–428 (NESM…STDN) and 457–474 (IPAQ…TQNI). Residues 477–486 (EPIPTAPLPK) are compositionally biased toward pro residues. Polar residues predominate over residues 578 to 598 (NRYQNQDYNTSRNTGYNQYSQ).

This sequence belongs to the protein kinase superfamily. CMGC Ser/Thr protein kinase family. CDC2/CDKX subfamily.

It localises to the nucleus. It carries out the reaction L-seryl-[protein] + ATP = O-phospho-L-seryl-[protein] + ADP + H(+). The catalysed reaction is L-threonyl-[protein] + ATP = O-phospho-L-threonyl-[protein] + ADP + H(+). It catalyses the reaction [DNA-directed RNA polymerase] + ATP = phospho-[DNA-directed RNA polymerase] + ADP + H(+). In terms of biological role, serine/threonine-protein kinase involved in transcription regulation. Phosphorylates the UBC2/RAD6 ubiquitin-conjugating enzyme (E2), leading to monoubiquitination of histone H2B and the silencing of telomeric-associated genes. Also required for histone H3 methylation. Necessary for the recovery from pheromone-induced growth arrest in the cell cycle G1 phase. In Kluyveromyces lactis (strain ATCC 8585 / CBS 2359 / DSM 70799 / NBRC 1267 / NRRL Y-1140 / WM37) (Yeast), this protein is Serine/threonine-protein kinase BUR1 (BUR1).